Consider the following 385-residue polypeptide: MVSIAAKSLPKLSGAVFGQFSRRKQLIQRHWLDTRTDQYYDVLRRIVVPECKNIASDVPEYPERIEKLLYYTNPAFSDAWNFTTELIYRTVADESHQTEENITKMYLIRATMDLLFTMSAVLDDISDRSEFRKGKKGWHMICQGGESTALYDGTQMGLFPLYLLKQYFKNDPGYSRLLETVVMTYIKLTIGQTIDVLGQFKKSPSMAEYKRINYYKAGQFVAAGSELAVIHAGITSQDLIDKTVEIFTIAGQIIQTWDDFNDYYSSSEQNGKLSCDFMNAGTTWVSAKAMEVFTPSQAVKFMECYGSDDQSKMKTVQELYDEIDMPKLYTEYVLENYNRCETLIKELPHDRLREACSSYMEWLVVRETPDEDSEHKVALCLNISG.

D123 and D127 together coordinate Mg(2+). Residues 123–127 (DDISD) carry the DDXXD motif motif.

Belongs to the terpene synthase family. Mg(2+) is required as a cofactor. As to expression, specifically expressed in tissues lining the cuticle of the abdominal sternites of mature males.

It carries out the reaction (2E,6E)-farnesyl diphosphate + H2O = (1S,6S,7R)-sesquipiperitol + diphosphate. The protein operates within pheromone biosynthesis. In terms of biological role, sesquiterpene alcohol synthase that catalyzes the formation of (1S,6S,7R)-sesquipiperitol, a terpene intermediate in murgantiol biosynthesis, a male-released aggregation pheromone. This Murgantia histrionica (Harlequin bug) protein is Sesquiterpene alcohol synthase.